A 1366-amino-acid chain; its full sequence is DNA-directed RNA polymerase subunit beta (1366 aa).

Belongs to the RNA polymerase beta chain family. The RNAP catalytic core consists of 2 alpha, 1 beta, 1 beta' and 1 omega subunit. When a sigma factor is associated with the core the holoenzyme is formed, which can initiate transcription.

The catalysed reaction is RNA(n) + a ribonucleoside 5'-triphosphate = RNA(n+1) + diphosphate. Its function is as follows. DNA-dependent RNA polymerase catalyzes the transcription of DNA into RNA using the four ribonucleoside triphosphates as substrates. The sequence is that of DNA-directed RNA polymerase subunit beta from Polynucleobacter asymbioticus (strain DSM 18221 / CIP 109841 / QLW-P1DMWA-1) (Polynucleobacter necessarius subsp. asymbioticus).